The following is a 507-amino-acid chain: Probable circularly permuted 1,3-beta-glucanase P23A10.11c YJL171C (507 aa).

Residues 1–22 (MIAKSFIASFLFLCFAFSGVKA) form the signal peptide. The segment covering 228 to 264 (AAPPDSASESTPASTSYASSTTSATSTSTTSGSSGSS) has biased composition (low complexity). The disordered stretch occupies residues 228 to 266 (AAPPDSASESTPASTSYASSTTSATSTSTTSGSSGSSDW). Positions 412-417 (EFDIFE) match the ExDxxE motif motif. Asn480 carries N-linked (GlcNAc...) asparagine glycosylation.

The protein belongs to the PGA52 family.

The protein resides in the secreted. It carries out the reaction Hydrolysis of (1-&gt;3)-beta-D-glucosidic linkages in (1-&gt;3)-beta-D-glucans.. Probable circularly permuted 1,3-beta-glucanase involved in cell wall modification through beta-1,3-glucan network alterations such as increased branching or remodeling. The chain is Probable circularly permuted 1,3-beta-glucanase P23A10.11c YJL171C from Schizosaccharomyces pombe (strain 972 / ATCC 24843) (Fission yeast).